The chain runs to 816 residues: Transducer protein Htr18 (816 aa).

The next 2 membrane-spanning stretches (helical) occupy residues 21-41 (VVIVTIMLVLVGVGVFTTQAV) and 282-302 (NIVVLIVTAVAGLGALVLVIG). Residues 303 to 356 (RDALTALTDMSDRAEAIAAGDIDTAIEETTRIDEVGDLRRSFRDIQEYLQTVAG) enclose the HAMP 1 domain. A disordered region spans residues 399–425 (DAQETAEQSRKEAEQSREEAEALAAAL). The segment covering 405 to 418 (EQSRKEAEQSREEA) has biased composition (basic and acidic residues). The 54-residue stretch at 423-476 (AALESQAQDIRETVEHAADGDLTQRLETDTDHESMAAIATALNSLLEELEGTIH) folds into the HAMP 2 domain. In terms of domain architecture, Methyl-accepting transducer spans 495–731 (SAEEVKRASG…EVVTMVDEVG (237 aa)). The interval 790–816 (GGAENTTGAFVRSASTDHSRDATHHDT) is disordered. The span at 793-803 (ENTTGAFVRSA) shows a compositional bias: polar residues. Positions 804–816 (STDHSRDATHHDT) are enriched in basic and acidic residues.

It belongs to the methyl-accepting chemotaxis (MCP) protein family. Methylated by CheR.

It is found in the cell membrane. Its function is as follows. Potentially involved in chemo- or phototactic signal transduction. This chain is Transducer protein Htr18 (htr18), found in Halobacterium salinarum (strain ATCC 29341 / DSM 671 / R1).